The primary structure comprises 182 residues: Fimbrial subunit type 1 (182 aa).

A signal peptide spans 1–23 (MKIKTLAIVVLSALSLSSAAALA). C44 and C84 are disulfide-bonded.

This sequence belongs to the fimbrial protein family.

The protein resides in the fimbrium. The protein is Fimbrial subunit type 1 of Klebsiella pneumoniae.